A 156-amino-acid chain; its full sequence is Ribosomal RNA large subunit methyltransferase H (156 aa).

S-adenosyl-L-methionine-binding positions include L73, G104, and 123–128 (LSALTL).

Belongs to the RNA methyltransferase RlmH family. As to quaternary structure, homodimer.

It is found in the cytoplasm. It carries out the reaction pseudouridine(1915) in 23S rRNA + S-adenosyl-L-methionine = N(3)-methylpseudouridine(1915) in 23S rRNA + S-adenosyl-L-homocysteine + H(+). Functionally, specifically methylates the pseudouridine at position 1915 (m3Psi1915) in 23S rRNA. This is Ribosomal RNA large subunit methyltransferase H from Shewanella loihica (strain ATCC BAA-1088 / PV-4).